The chain runs to 258 residues: Small ribosomal subunit protein uS2 (258 aa).

Residues 234 to 258 (ETANAEEAMQKAAAVEAAAEAAPAQ) are disordered. A compositionally biased stretch (low complexity) spans 236-258 (ANAEEAMQKAAAVEAAAEAAPAQ).

The protein belongs to the universal ribosomal protein uS2 family.

This Desulfovibrio desulfuricans (strain ATCC 27774 / DSM 6949 / MB) protein is Small ribosomal subunit protein uS2.